Here is a 115-residue protein sequence, read N- to C-terminus: Protein V2 (115 aa).

This sequence belongs to the geminiviridae protein AV2/V2 family. As to quaternary structure, interacts with host SGS3.

Its subcellular location is the host cytoplasm. It is found in the host perinuclear region. Functionally, through its interaction with host SGS3, acts as a suppressor of RNA-mediated gene silencing, also known as post-transcriptional gene silencing (PTGS), a mechanism of plant viral defense that limits the accumulation of viral RNAs. This Tomato yellow leaf curl Sardinia virus (isolate Spain-2) (TYLCSV) protein is Protein V2.